Consider the following 209-residue polypeptide: Urease accessory protein UreG (209 aa).

11-18 (GPVGSGKT) serves as a coordination point for GTP.

It belongs to the SIMIBI class G3E GTPase family. UreG subfamily. Homodimer. UreD, UreF and UreG form a complex that acts as a GTP-hydrolysis-dependent molecular chaperone, activating the urease apoprotein by helping to assemble the nickel containing metallocenter of UreC. The UreE protein probably delivers the nickel.

Its subcellular location is the cytoplasm. Facilitates the functional incorporation of the urease nickel metallocenter. This process requires GTP hydrolysis, probably effectuated by UreG. The sequence is that of Urease accessory protein UreG from Edwardsiella ictaluri (strain 93-146).